A 98-amino-acid chain; its full sequence is Alpha-elicitin MGM-alpha (98 aa).

3 disulfide bridges follow: Cys3-Cys71, Cys27-Cys56, and Cys51-Cys95.

The protein belongs to the elicitin family.

Its subcellular location is the secreted. In terms of biological role, induces local and distal defense responses (incompatible hypersensitive reaction) in plants from the solanaceae and cruciferae families. Elicits leaf necrosis and causes the accumulation of pathogenesis-related proteins. Might interact with the lipidic molecules of the plasma membrane. The polypeptide is Alpha-elicitin MGM-alpha (Phytophthora megasperma (Potato pink rot fungus)).